Reading from the N-terminus, the 697-residue chain is MCKSLRYCFSHCLYLAMTRLEEVNREVNMHSSVRYLGYLARFNLLVAICLGLYVRWEKTANSLILVIFILGLFVLGIASILYYYFSMEAASLSLSNLWFGFLLGLLCFLDNSSFKSDVKEETTKYLLLTSIVLRILCALVERLSGYVRHRPTLLTTVEFLELVGFAIASTTMLVERSLSVILLVMALAMLIIDLRMKSFLAIPNLIIFSVLLFFSSLETPQNPIAFACFFICLITDPFLDIYFSGLSVTERWKPFLYRGRICRRLSVVFTGMIELTFFTLSAFKLRDTHLWYFVIPGFSIFGIFWMICHIIFLLTLWGFHTKLNDCHKVYINHRADNNSLDRIMASKGMRHFCLISEQLVFFSLLATAILGAVSWQPTNGIFLSMFLIVLPLESMAHGLFHELGNCLGGTSVGYAIVIPTNFCSPDGQPTLLPPEHVQELNLRSTGMLNAIQRFFAYHMIETYGCDYSTSGLSFDTLHSKLKAFLELRTVDGPRHDTYVLYYSGHTHGSGEWALAGGDILRLDTLLEWWREKNGSFCSRLIIILDSENSTPWVKEVRKINDQYVAVQGAELAKTVDIEEADPPQLGDFTRDWVEYNCNSTNNICWTEKGRTVKAMYGVSKRWSDYTLHLPTGSDVAKHWMLHFPRITYPLVHLANWLCGLNLFWMCKACFRCLKRLKMSWFLPTVLDTGQGFKLVKS.

3 helical membrane passes run 36–56 (LGYLARFNLLVAICLGLYVRW), 63–83 (LILVIFILGLFVLGIASILYY), and 89–109 (AASLSLSNLWFGFLLGLLCFL). Asn111 is a glycosylation site (N-linked (GlcNAc...) asparagine). A run of 5 helical transmembrane segments spans residues 172–192 (MLVERSLSVILLVMALAMLII), 199–219 (FLAIPNLIIFSVLLFFSSLET), 223–243 (PIAFACFFICLITDPFLDIYF), 265–285 (LSVVFTGMIELTFFTLSAFKL), and 293–313 (FVIPGFSIFGIFWMICHIIFL). Asn337 carries an N-linked (GlcNAc...) asparagine glycan. 2 helical membrane passes run 352-372 (FCLISEQLVFFSLLATAILGA) and 380-400 (GIFLSMFLIVLPLESMAHGLF). 2 N-linked (GlcNAc...) asparagine glycosylation sites follow: Asn533 and Asn598. A helical transmembrane segment spans residues 646 to 666 (ITYPLVHLANWLCGLNLFWMC).

This sequence belongs to the TMEM168 family.

It is found in the nucleus membrane. Plays a key role in maintaining the cardiac electrical stability by modulating cell surface expression of SCN5A. May play a role i the modulation of anxiety behavior by regulating GABAergic neuronal system in the nucleus accumbens. This chain is Transmembrane protein 168 (Tmem168), found in Rattus norvegicus (Rat).